A 405-amino-acid polypeptide reads, in one-letter code: Glutamate-pyruvate aminotransferase AlaA (405 aa).

Gly41 and Asn179 together coordinate L-alanine. Lys240 carries the N6-(pyridoxal phosphate)lysine modification. Arg378 is an L-alanine binding site.

It belongs to the class-I pyridoxal-phosphate-dependent aminotransferase family. In terms of assembly, homodimer. The cofactor is pyridoxal 5'-phosphate.

Its subcellular location is the cytoplasm. The catalysed reaction is L-alanine + 2-oxoglutarate = pyruvate + L-glutamate. Its pathway is amino-acid biosynthesis; L-alanine biosynthesis. Functionally, involved in the biosynthesis of alanine. Catalyzes the transamination of pyruvate by glutamate, leading to the formation of L-alanine and 2-oxoglutarate. Is also able to catalyze the reverse reaction. In Escherichia coli (strain K12), this protein is Glutamate-pyruvate aminotransferase AlaA.